Reading from the N-terminus, the 215-residue chain is Inositol diphosphatase DSP1 (215 aa).

Residues 58–209 (NFSMVDNGIF…VSSFSHIPMS (152 aa)) form the Tyrosine-protein phosphatase domain. The WPD loop important for active site topology stretch occupies residues 114–126 (FGIEGNKEPFVNI). Residues Asn-125, Ile-126, His-129, and Lys-130 each contribute to the 1D-myo-inositol hexakisphosphate site. Residue Cys-150 is the Phosphocysteine intermediate of the active site.

Belongs to the protein-tyrosine phosphatase family. Atypical dual-specificity phosphatase Siw14-like subfamily. In terms of assembly, homodimer and homohexamer; behaves as a monomer in solution. As to expression, highly expressed in siliques and at lower levels in roots, leaves and flowers.

The catalysed reaction is 5-diphospho-1D-myo-inositol 1,2,3,4,6-pentakisphosphate + H2O = 1D-myo-inositol hexakisphosphate + phosphate + H(+). It catalyses the reaction 1,5-bis(diphospho)-1D-myo-inositol 2,3,4,6-tetrakisphosphate + H2O = 1-diphospho-1D-myo-inositol 2,3,4,5,6-pentakisphosphate + phosphate + 2 H(+). It carries out the reaction 3,5-bis(diphospho)-1D-myo-inositol 1,2,4,6-tetrakisphosphate + H2O = 3-diphospho-1D-myo-inositol 1,2,4,5,6-pentakisphosphate + phosphate + 2 H(+). The enzyme catalyses 6-diphospho-1D-myo-inositol pentakisphosphate + H2O = 1D-myo-inositol hexakisphosphate + phosphate + H(+). The catalysed reaction is 5-diphospho-1D-myo-inositol 1,3,4,6-tetrakisphosphate + H2O = 1D-myo-inositol 1,3,4,5,6-pentakisphosphate + phosphate + H(+). Inhibited by manganese, calcium and zinc ions but not magnesium ions. In terms of biological role, cleaves the beta-phosphate at the 5-position of soluble inositol pyrophosphates. Has highest activity on 5-diphosphoinositol 1,2,3,4,6-pentakisphosphate (5-InsP(7)), 1,5-bis-diphosphoinositol 2,3,4,6-tetrakisphosphate (1,5-InsP(8)) and 3,5-InsP(8), but has weak activity against 1-diphosphoinositol 2,3,4,5,6-pentakisphosphate (1-InsP(7)). Dephosphorylates the phosphoinositides PI(3,4,5)P3, PI(3,5)P2, but not PI(3)P, PI(3,4)P2 or PI(4,5)P2. Possesses phosphotyrosine phosphatase activity in vitro, and can hydrolyze para-nitrophenyl phosphate, O-methylfluorescein phosphate, polyphosphate and ATP. This is Inositol diphosphatase DSP1 from Arabidopsis thaliana (Mouse-ear cress).